A 254-amino-acid polypeptide reads, in one-letter code: 5-oxoprolinase subunit A (254 aa).

Belongs to the LamB/PxpA family. In terms of assembly, forms a complex composed of PxpA, PxpB and PxpC.

The catalysed reaction is 5-oxo-L-proline + ATP + 2 H2O = L-glutamate + ADP + phosphate + H(+). Functionally, catalyzes the cleavage of 5-oxoproline to form L-glutamate coupled to the hydrolysis of ATP to ADP and inorganic phosphate. The chain is 5-oxoprolinase subunit A from Brevibacillus brevis (strain 47 / JCM 6285 / NBRC 100599).